The sequence spans 1284 residues: 1,6-alpha-glucosyltransferase (1284 aa).

Residues Met1–Ala35 form the signal peptide. The active-site Nucleophile is Asp433. The active site involves Asp436. The active-site Proton donor is Asp495. CBM6 domains lie at Ser856–Pro988 and Gly994–Ser1120.

The protein belongs to the glycosyl hydrolase 31 family.

It localises to the secreted. The enzyme catalyses 2 D-maltotetraose = alpha-isomaltosyl-(1-&gt;4)-D-maltotriose + D-maltotriose. It catalyses the reaction Transfers an alpha-D-glucosyl residue in a (1-&gt;4)-alpha-D-glucan to the primary hydroxy group of glucose, free or combined in a (1-&gt;4)-alpha-D-glucan.. With respect to regulation, strongly activated and stabilized by various divalent cations. Strongly inhibited by Cu(2+), Hg(2+) and EDTA, and moderately inhibited by Tris. Functionally, glycosyltransferase involved, together with CtsY, in the conversion of alpha-1,4-glucan into a cyclic tetrasaccharide (CTS) constructed from four alpha-glucopyranosyl residues. Catalyzes an intermolecular transglucosylation in which a glucose residue at the non-reducing end of maltotetraose is transferred to the 6-OH of an other non-reducing glucose, leading to the formation of alpha-isomaltosyl-(1-&gt;4)-D-maltotriose. Has a wide substrate specificity, and acts on oligosaccharides with alpha-1,4-glucosidic linkages at the non-reducing end, except for maltose. In contrast, has little activity toward oligosaccharides with alpha-1,6-glucosidic linkages at the non-reducing end. In Sporosarcina globispora (Bacillus globisporus), this protein is 1,6-alpha-glucosyltransferase.